The sequence spans 500 residues: Glutamyl-tRNA(Gln) amidotransferase subunit A (500 aa).

Active-site charge relay system residues include Lys93 and Ser168. The active-site Acyl-ester intermediate is Ser192.

This sequence belongs to the amidase family. GatA subfamily. Heterotrimer of A, B and C subunits.

The enzyme catalyses L-glutamyl-tRNA(Gln) + L-glutamine + ATP + H2O = L-glutaminyl-tRNA(Gln) + L-glutamate + ADP + phosphate + H(+). Allows the formation of correctly charged Gln-tRNA(Gln) through the transamidation of misacylated Glu-tRNA(Gln) in organisms which lack glutaminyl-tRNA synthetase. The reaction takes place in the presence of glutamine and ATP through an activated gamma-phospho-Glu-tRNA(Gln). This Corynebacterium jeikeium (strain K411) protein is Glutamyl-tRNA(Gln) amidotransferase subunit A.